We begin with the raw amino-acid sequence, 408 residues long: Peptidase T (408 aa).

His78 is a Zn(2+) binding site. Residue Asp80 is part of the active site. Residue Asp140 coordinates Zn(2+). Glu173 functions as the Proton acceptor in the catalytic mechanism. The Zn(2+) site is built by Glu174, Asp196, and His379.

It belongs to the peptidase M20B family. Requires Zn(2+) as cofactor.

It is found in the cytoplasm. The catalysed reaction is Release of the N-terminal residue from a tripeptide.. Its function is as follows. Cleaves the N-terminal amino acid of tripeptides. This Escherichia fergusonii (strain ATCC 35469 / DSM 13698 / CCUG 18766 / IAM 14443 / JCM 21226 / LMG 7866 / NBRC 102419 / NCTC 12128 / CDC 0568-73) protein is Peptidase T.